The sequence spans 323 residues: Acetyl-coenzyme A carboxylase carboxyl transferase subunit alpha (323 aa).

The CoA carboxyltransferase C-terminal domain occupies 39–293 (RLSKKSQQLT…RRALADSLRQ (255 aa)).

It belongs to the AccA family. Acetyl-CoA carboxylase is a heterohexamer composed of biotin carboxyl carrier protein (AccB), biotin carboxylase (AccC) and two subunits each of ACCase subunit alpha (AccA) and ACCase subunit beta (AccD).

It localises to the cytoplasm. It carries out the reaction N(6)-carboxybiotinyl-L-lysyl-[protein] + acetyl-CoA = N(6)-biotinyl-L-lysyl-[protein] + malonyl-CoA. Its pathway is lipid metabolism; malonyl-CoA biosynthesis; malonyl-CoA from acetyl-CoA: step 1/1. In terms of biological role, component of the acetyl coenzyme A carboxylase (ACC) complex. First, biotin carboxylase catalyzes the carboxylation of biotin on its carrier protein (BCCP) and then the CO(2) group is transferred by the carboxyltransferase to acetyl-CoA to form malonyl-CoA. The protein is Acetyl-coenzyme A carboxylase carboxyl transferase subunit alpha of Paraburkholderia phymatum (strain DSM 17167 / CIP 108236 / LMG 21445 / STM815) (Burkholderia phymatum).